The primary structure comprises 772 residues: General transcription and DNA repair factor IIH helicase subunit XPD (772 aa).

Positions 7–283 constitute a Helicase ATP-binding domain; it reads DLPILFPYPR…QSDSKKLQDE (277 aa). 42-49 is a binding site for ATP; it reads MPSGTGKT. [4Fe-4S] cluster-binding residues include cysteine 115, cysteine 133, cysteine 154, and cysteine 189. A DEAH box motif is present at residues 233-236; that stretch reads DEAH.

It belongs to the helicase family. RAD3/XPD subfamily. In terms of assembly, component of the 7-subunit TFIIH core complex composed of XPB/ptr8, XPD/rad15, ssl1, tfb1, tfb2, tfb4 and tfb5, which is active in NER. The core complex associates with the 3-subunit CTD-kinase module TFIIK composed of mcs2/cyclin H, mcs6/cdk7 and pmh1/tfb3 to form the 10-subunit holoenzyme (holo-TFIIH) active in transcription. It depends on [4Fe-4S] cluster as a cofactor.

The protein localises to the nucleus. The catalysed reaction is Couples ATP hydrolysis with the unwinding of duplex DNA at the replication fork by translocating in the 5'-3' direction. This creates two antiparallel DNA single strands (ssDNA). The leading ssDNA polymer is the template for DNA polymerase III holoenzyme which synthesizes a continuous strand.. It catalyses the reaction ATP + H2O = ADP + phosphate + H(+). Its function is as follows. ATP-dependent 5'-3' DNA helicase, component of the general transcription and DNA repair factor IIH (TFIIH) core complex, which is involved in general and transcription-coupled nucleotide excision repair (NER) of damaged DNA and, when complexed to TFIIK, in RNA transcription by RNA polymerase II. In NER, TFIIH acts by opening DNA around the lesion to allow the excision of the damaged oligonucleotide and its replacement by a new DNA fragment. The ATP-dependent helicase activity of XPD/rad15 is required for DNA opening. In transcription, TFIIH has an essential role in transcription initiation. When the pre-initiation complex (PIC) has been established, TFIIH is required for promoter opening and promoter escape. Phosphorylation of the C-terminal tail (CTD) of the largest subunit of RNA polymerase II by the kinase module TFIIK controls the initiation of transcription. XPD/rad15 acts by forming a bridge between TFIIK and the core-TFIIH complex. Involved in the maintenance of the fidelity of DNA replication. In Schizosaccharomyces pombe (strain 972 / ATCC 24843) (Fission yeast), this protein is General transcription and DNA repair factor IIH helicase subunit XPD.